The chain runs to 145 residues: 3-hydroxyacyl-[acyl-carrier-protein] dehydratase FabZ (145 aa).

His-51 is an active-site residue.

It belongs to the thioester dehydratase family. FabZ subfamily.

It localises to the cytoplasm. The enzyme catalyses a (3R)-hydroxyacyl-[ACP] = a (2E)-enoyl-[ACP] + H2O. Its function is as follows. Involved in unsaturated fatty acids biosynthesis. Catalyzes the dehydration of short chain beta-hydroxyacyl-ACPs and long chain saturated and unsaturated beta-hydroxyacyl-ACPs. The chain is 3-hydroxyacyl-[acyl-carrier-protein] dehydratase FabZ from Staphylococcus haemolyticus (strain JCSC1435).